We begin with the raw amino-acid sequence, 245 residues long: Pyridoxine 5'-phosphate synthase (245 aa).

Asn-7 serves as a coordination point for 3-amino-2-oxopropyl phosphate. Position 9–10 (9–10 (DH)) interacts with 1-deoxy-D-xylulose 5-phosphate. Arg-18 is a 3-amino-2-oxopropyl phosphate binding site. The active-site Proton acceptor is His-43. 2 residues coordinate 1-deoxy-D-xylulose 5-phosphate: Arg-45 and His-50. The active-site Proton acceptor is Glu-70. Thr-100 serves as a coordination point for 1-deoxy-D-xylulose 5-phosphate. The active-site Proton donor is His-190. 3-amino-2-oxopropyl phosphate is bound by residues Gly-191 and 212 to 213 (GH).

It belongs to the PNP synthase family. In terms of assembly, homooctamer; tetramer of dimers.

It localises to the cytoplasm. It catalyses the reaction 3-amino-2-oxopropyl phosphate + 1-deoxy-D-xylulose 5-phosphate = pyridoxine 5'-phosphate + phosphate + 2 H2O + H(+). It participates in cofactor biosynthesis; pyridoxine 5'-phosphate biosynthesis; pyridoxine 5'-phosphate from D-erythrose 4-phosphate: step 5/5. Catalyzes the complicated ring closure reaction between the two acyclic compounds 1-deoxy-D-xylulose-5-phosphate (DXP) and 3-amino-2-oxopropyl phosphate (1-amino-acetone-3-phosphate or AAP) to form pyridoxine 5'-phosphate (PNP) and inorganic phosphate. In Prochlorococcus marinus (strain MIT 9303), this protein is Pyridoxine 5'-phosphate synthase.